A 334-amino-acid polypeptide reads, in one-letter code: Endochitinase 3 (334 aa).

The signal sequence occupies residues 1 to 23 (MRLLEFTALSSLLVLFLLLAVSA). Residues 24 to 65 (EQCGKQAGGARCPSGMCCSNFGWCGNTQDYCGPGKCQSQCPS) form the Chitin-binding type-1 domain. Intrachain disulfides connect Cys26–Cys41, Cys35–Cys47, Cys40–Cys54, and Cys59–Cys63. The interval 64–84 (PSGPGPTPRPPTPTPGPSTGD) is disordered. Residues 66-79 (GPGPTPRPPTPTPG) are compositionally biased toward pro residues. A 4-hydroxyproline mark is found at Pro73, Pro74, and Pro76. 3 cysteine pairs are disulfide-bonded: Cys106-Cys168, Cys180-Cys188, and Cys287-Cys319. Glu150 serves as the catalytic Proton donor. Residues 328–334 (GLLLETM) constitute a propeptide, removed in mature form.

The protein belongs to the glycosyl hydrolase 19 family. Chitinase class I subfamily. The 4-hydroxyproline residues are not glycosylated in this plant vacuolar protein.

Its subcellular location is the vacuole. It catalyses the reaction Random endo-hydrolysis of N-acetyl-beta-D-glucosaminide (1-&gt;4)-beta-linkages in chitin and chitodextrins.. In terms of biological role, defense against chitin-containing fungal pathogens. This chain is Endochitinase 3 (CHN14), found in Nicotiana tabacum (Common tobacco).